A 121-amino-acid polypeptide reads, in one-letter code: MARIVGVELPNNKKTFVALTYIYGIGPARAKEILKNTNIDGDKRVKDLTDEEISRISKYITDHYKVEGELRQEVERNIKRLIEIGCYRGIRHKIGLPVRGQKTHSNARTRKGPRASRIKKK.

The segment at 97–121 (PVRGQKTHSNARTRKGPRASRIKKK) is disordered. Positions 101–121 (QKTHSNARTRKGPRASRIKKK) are enriched in basic residues.

This sequence belongs to the universal ribosomal protein uS13 family. In terms of assembly, part of the 30S ribosomal subunit. Forms a loose heterodimer with protein S19. Forms two bridges to the 50S subunit in the 70S ribosome.

In terms of biological role, located at the top of the head of the 30S subunit, it contacts several helices of the 16S rRNA. In the 70S ribosome it contacts the 23S rRNA (bridge B1a) and protein L5 of the 50S subunit (bridge B1b), connecting the 2 subunits; these bridges are implicated in subunit movement. Contacts the tRNAs in the A and P-sites. In Kosmotoga olearia (strain ATCC BAA-1733 / DSM 21960 / TBF 19.5.1), this protein is Small ribosomal subunit protein uS13.